The primary structure comprises 78 residues: LLLSTCVALLLQPPLGALGASLEPEYPGDNATPEQMAQYAAELRRYINMLTRPRYGKRDKEGTLDFLECGSPHSAVPR.

The signal sequence occupies residues 1–19 (LLLSTCVALLLQPPLGALG). Y55 carries the tyrosine amide modification.

The protein belongs to the NPY family.

The protein resides in the secreted. Functionally, hormone secreted by pancreatic cells that acts as a regulator of pancreatic and gastrointestinal functions probably by signaling through the G protein-coupled receptor NPY4R2. The polypeptide is Pancreatic polypeptide prohormone (PPY) (Ovis aries (Sheep)).